The sequence spans 321 residues: Olfactory receptor 5K4 (321 aa).

Topologically, residues 1 to 25 (MARENHSLAAEFILIGFTNYPELKT) are extracellular. Asparagine 5 carries an N-linked (GlcNAc...) asparagine glycan. A helical membrane pass occupies residues 26-46 (LLFVVFSAIYLVTMVGNLGLV). Residues 47–54 (ALIYVERR) lie on the Cytoplasmic side of the membrane. A helical membrane pass occupies residues 55 to 75 (LLTPMYIFLGNLALMDSCCSC). Topologically, residues 76–97 (AVTPKMLENFFSEDRIISLYEC) are extracellular. A disulfide bond links cysteine 97 and cysteine 179. Residues 98–118 (MAQFYFLCLAETTDCFLLATM) traverse the membrane as a helical segment. At 119–139 (AYDRYVAICHPLQYHTMMSKT) the chain is on the cytoplasmic side. A helical membrane pass occupies residues 140-160 (LCIRMTTGAFKAGNLHSMIHV). The Extracellular portion of the chain corresponds to 161–205 (GLLLRLTFCRSNKIHHFFCDILPLYRLSCTDPSINELMIYIFSIP). A helical transmembrane segment spans residues 206 to 226 (IQIFTIATVLISYLCILLTVF). Residues 227-240 (KMKSKEGRGKAFST) are Cytoplasmic-facing. Residues 241-261 (CASHFLSVSIFYICLLMYIGP) traverse the membrane as a helical segment. Residues 262–268 (SEEGDKD) are Extracellular-facing. A helical transmembrane segment spans residues 269–289 (TPVAIFYAIVIPLLNPFIYSL). Topologically, residues 290-321 (RNKEVINVLKKIMRNYNILKQTCSIANLFLIY) are cytoplasmic.

Belongs to the G-protein coupled receptor 1 family.

The protein resides in the cell membrane. Odorant receptor. The protein is Olfactory receptor 5K4 (OR5K4) of Homo sapiens (Human).